Here is a 258-residue protein sequence, read N- to C-terminus: MTEGGEYSPAMMSAEPFLTMKKMKKSNHNKNNQRRFSDEQIKSLEMMFESETRLEPRKKVQLARELGLQPRQVAIWFQNKRARWKSKQLETEYNILRQNYDNLASQFESLKKEKQALVSELQRLKEATQKKTQEEERQCSGDQAVVALSSTHHESENEENRRRKPEEVRPEMEMKDDKGHHGVMCDHHDYEDDDNGYSNNIKREYFGGFEEEPDHLMNIVEPADSCLTSSDDWRGFKSDTTTLLDQSSNNYPWRDFWS.

Positions 29 to 88 (NKNNQRRFSDEQIKSLEMMFESETRLEPRKKVQLARELGLQPRQVAIWFQNKRARWKSKQ) form a DNA-binding region, homeobox. The segment at 89 to 124 (LETEYNILRQNYDNLASQFESLKKEKQALVSELQRL) is leucine-zipper. Positions 149–183 (SSTHHESENEENRRRKPEEVRPEMEMKDDKGHHGV) are disordered. The segment covering 151–183 (THHESENEENRRRKPEEVRPEMEMKDDKGHHGV) has biased composition (basic and acidic residues).

Belongs to the HD-ZIP homeobox family. Class I subfamily. Interacts with TBP2 and TFIIB1. In terms of tissue distribution, widely expressed.

The protein resides in the nucleus. Functionally, probable transcription activator that may act as growth regulators in response to water deficit. The chain is Homeobox-leucine zipper protein ATHB-7 (ATHB-7) from Arabidopsis thaliana (Mouse-ear cress).